The primary structure comprises 272 residues: HMP-PP phosphatase (272 aa).

Catalysis depends on Asp8, which acts as the Nucleophile. Mg(2+) is bound by residues Asp8, Asp10, and Asp212.

The protein belongs to the HAD-like hydrolase superfamily. Cof family. Requires Mg(2+) as cofactor.

The enzyme catalyses 4-amino-2-methyl-5-(diphosphooxymethyl)pyrimidine + H2O = 4-amino-2-methyl-5-(phosphooxymethyl)pyrimidine + phosphate + H(+). Its function is as follows. Catalyzes the hydrolysis of 4-amino-2-methyl-5-hydroxymethylpyrimidine pyrophosphate (HMP-PP) to 4-amino-2-methyl-5-hydroxymethylpyrimidine phosphate (HMP-P). In Escherichia coli (strain K12 / MC4100 / BW2952), this protein is HMP-PP phosphatase.